The sequence spans 172 residues: Ribosome maturation factor RimM (172 aa).

A PRC barrel domain is found at 97–170 (ENEFYFHEII…KITIEVMEGL (74 aa)).

Belongs to the RimM family. As to quaternary structure, binds ribosomal protein uS19.

Its subcellular location is the cytoplasm. Its function is as follows. An accessory protein needed during the final step in the assembly of 30S ribosomal subunit, possibly for assembly of the head region. Essential for efficient processing of 16S rRNA. May be needed both before and after RbfA during the maturation of 16S rRNA. It has affinity for free ribosomal 30S subunits but not for 70S ribosomes. The chain is Ribosome maturation factor RimM from Listeria monocytogenes serovar 1/2a (strain ATCC BAA-679 / EGD-e).